A 631-amino-acid chain; its full sequence is Phosphomethylpyrimidine synthase (631 aa).

Substrate-binding positions include N239, M268, Y297, H333, 353 to 355, 394 to 397, and E433; these read SRG and DGLR. H437 is a Zn(2+) binding site. Y460 is a binding site for substrate. H501 serves as a coordination point for Zn(2+). Residues C581, C584, and C589 each contribute to the [4Fe-4S] cluster site.

The protein belongs to the ThiC family. As to quaternary structure, homodimer. The cofactor is [4Fe-4S] cluster.

The enzyme catalyses 5-amino-1-(5-phospho-beta-D-ribosyl)imidazole + S-adenosyl-L-methionine = 4-amino-2-methyl-5-(phosphooxymethyl)pyrimidine + CO + 5'-deoxyadenosine + formate + L-methionine + 3 H(+). It participates in cofactor biosynthesis; thiamine diphosphate biosynthesis. Functionally, catalyzes the synthesis of the hydroxymethylpyrimidine phosphate (HMP-P) moiety of thiamine from aminoimidazole ribotide (AIR) in a radical S-adenosyl-L-methionine (SAM)-dependent reaction. The protein is Phosphomethylpyrimidine synthase of Salmonella gallinarum (strain 287/91 / NCTC 13346).